We begin with the raw amino-acid sequence, 242 residues long: MAPK-interacting and spindle-stabilizing protein-like (242 aa).

Disordered regions lie at residues 1 to 145 (MSDE…SLGP) and 192 to 242 (PPGA…HSYH). An N-acetylserine modification is found at S2. Phosphoserine is present on residues S2, S6, and S15. Positions 13–29 (EQSSAKPPAVTNTKAGH) are enriched in polar residues. Positions 30–43 (SSQGWPGSSPWSNP) are enriched in low complexity. Pro residues-rich tracts occupy residues 44–53 (SAPPAMPSGL) and 75–114 (SMPP…PGPT). Residues 192 to 210 (PPGAWGPAAPYPGPAGSYP) show a composition bias toward low complexity.

The protein belongs to the MISS family.

This Mus musculus (Mouse) protein is MAPK-interacting and spindle-stabilizing protein-like (Mapk1ip1l).